A 228-amino-acid polypeptide reads, in one-letter code: L-ribulose-5-phosphate 4-epimerase UlaF (228 aa).

Substrate is bound by residues 26–27, 43–44, and 72–73; these read GN, SG, and SS. Zn(2+)-binding residues include Asp-74, His-93, and His-95. Asp-118 (proton donor/acceptor) is an active-site residue. His-167 lines the Zn(2+) pocket. Catalysis depends on Tyr-225, which acts as the Proton donor/acceptor.

It belongs to the aldolase class II family. AraD/FucA subfamily. Zn(2+) serves as cofactor.

It carries out the reaction L-ribulose 5-phosphate = D-xylulose 5-phosphate. It participates in cofactor degradation; L-ascorbate degradation; D-xylulose 5-phosphate from L-ascorbate: step 4/4. Catalyzes the isomerization of L-ribulose 5-phosphate to D-xylulose 5-phosphate. Is involved in the anaerobic L-ascorbate utilization. The sequence is that of L-ribulose-5-phosphate 4-epimerase UlaF from Salmonella paratyphi A (strain ATCC 9150 / SARB42).